The chain runs to 98 residues: MMMAVLNISLAFIFSLLGTLMFRSHLMSTLLCLEGMMLTLFIITTITSLNSHSMVMYPIPIVILVFAACEAAVGLALLVKVSNTYGSDYVQNLNLLQC.

3 consecutive transmembrane segments (helical) span residues 2-22, 26-46, and 59-79; these read MMAV…TLMF, LMST…ITTI, and IPIV…ALLV.

It belongs to the complex I subunit 4L family. In terms of assembly, core subunit of respiratory chain NADH dehydrogenase (Complex I) which is composed of 45 different subunits.

The protein resides in the mitochondrion inner membrane. It carries out the reaction a ubiquinone + NADH + 5 H(+)(in) = a ubiquinol + NAD(+) + 4 H(+)(out). Its function is as follows. Core subunit of the mitochondrial membrane respiratory chain NADH dehydrogenase (Complex I) which catalyzes electron transfer from NADH through the respiratory chain, using ubiquinone as an electron acceptor. Part of the enzyme membrane arm which is embedded in the lipid bilayer and involved in proton translocation. The polypeptide is NADH-ubiquinone oxidoreductase chain 4L (MT-ND4L) (Phodopus sungorus (Striped hairy-footed hamster)).